A 429-amino-acid polypeptide reads, in one-letter code: Enolase (429 aa).

Gln-163 provides a ligand contact to (2R)-2-phosphoglycerate. Glu-205 functions as the Proton donor in the catalytic mechanism. Mg(2+)-binding residues include Asp-242, Glu-287, and Asp-314. (2R)-2-phosphoglycerate is bound by residues Lys-339, Arg-368, Ser-369, and Lys-390. The active-site Proton acceptor is Lys-339.

Belongs to the enolase family. It depends on Mg(2+) as a cofactor.

The protein resides in the cytoplasm. It is found in the secreted. Its subcellular location is the cell surface. The catalysed reaction is (2R)-2-phosphoglycerate = phosphoenolpyruvate + H2O. It participates in carbohydrate degradation; glycolysis; pyruvate from D-glyceraldehyde 3-phosphate: step 4/5. Its function is as follows. Catalyzes the reversible conversion of 2-phosphoglycerate (2-PG) into phosphoenolpyruvate (PEP). It is essential for the degradation of carbohydrates via glycolysis. The protein is Enolase of Magnetococcus marinus (strain ATCC BAA-1437 / JCM 17883 / MC-1).